Here is a 337-residue protein sequence, read N- to C-terminus: tRNA N6-adenosine threonylcarbamoyltransferase (337 aa).

His114 and His118 together coordinate Fe cation. Substrate-binding positions include Leu136 to Gly140, Asp169, Gly182, Asp186, and Asn275. Fe cation is bound at residue Asp301.

The protein belongs to the KAE1 / TsaD family. Fe(2+) is required as a cofactor.

It is found in the cytoplasm. It carries out the reaction L-threonylcarbamoyladenylate + adenosine(37) in tRNA = N(6)-L-threonylcarbamoyladenosine(37) in tRNA + AMP + H(+). Functionally, required for the formation of a threonylcarbamoyl group on adenosine at position 37 (t(6)A37) in tRNAs that read codons beginning with adenine. Is involved in the transfer of the threonylcarbamoyl moiety of threonylcarbamoyl-AMP (TC-AMP) to the N6 group of A37, together with TsaE and TsaB. TsaD likely plays a direct catalytic role in this reaction. This chain is tRNA N6-adenosine threonylcarbamoyltransferase, found in Streptococcus uberis (strain ATCC BAA-854 / 0140J).